Here is a 255-residue protein sequence, read N- to C-terminus: Tryptophan synthase alpha chain (255 aa).

Residues Glu-49 and Asp-60 each act as proton acceptor in the active site.

It belongs to the TrpA family. In terms of assembly, tetramer of two alpha and two beta chains.

It carries out the reaction (1S,2R)-1-C-(indol-3-yl)glycerol 3-phosphate + L-serine = D-glyceraldehyde 3-phosphate + L-tryptophan + H2O. It participates in amino-acid biosynthesis; L-tryptophan biosynthesis; L-tryptophan from chorismate: step 5/5. Functionally, the alpha subunit is responsible for the aldol cleavage of indoleglycerol phosphate to indole and glyceraldehyde 3-phosphate. The protein is Tryptophan synthase alpha chain of Desulfovibrio desulfuricans (strain ATCC 27774 / DSM 6949 / MB).